The chain runs to 377 residues: Chaperone protein DnaJ (377 aa).

A J domain is found at 5 to 70 (DYYEVLEVSR…EKRTIYDRYG (66 aa)). The CR-type zinc finger occupies 138–215 (GCEKKIDITY…CQGKGYHEET (78 aa)). The Zn(2+) site is built by cysteine 151, cysteine 154, cysteine 167, cysteine 170, cysteine 189, cysteine 192, cysteine 203, and cysteine 206. CXXCXGXG motif repeat units follow at residues 151-158 (CEECGGTG), 167-174 (CDYCGGQG), 189-196 (CPKCHGEG), and 203-210 (CPSCQGKG).

This sequence belongs to the DnaJ family. As to quaternary structure, homodimer. Requires Zn(2+) as cofactor.

It localises to the cytoplasm. In terms of biological role, participates actively in the response to hyperosmotic and heat shock by preventing the aggregation of stress-denatured proteins and by disaggregating proteins, also in an autonomous, DnaK-independent fashion. Unfolded proteins bind initially to DnaJ; upon interaction with the DnaJ-bound protein, DnaK hydrolyzes its bound ATP, resulting in the formation of a stable complex. GrpE releases ADP from DnaK; ATP binding to DnaK triggers the release of the substrate protein, thus completing the reaction cycle. Several rounds of ATP-dependent interactions between DnaJ, DnaK and GrpE are required for fully efficient folding. Also involved, together with DnaK and GrpE, in the DNA replication of plasmids through activation of initiation proteins. This is Chaperone protein DnaJ from Sulfurovum sp. (strain NBC37-1).